The primary structure comprises 161 residues: Nucleotide-binding protein Csal_2524 (161 aa).

Belongs to the YajQ family.

Functionally, nucleotide-binding protein. The protein is Nucleotide-binding protein Csal_2524 of Chromohalobacter salexigens (strain ATCC BAA-138 / DSM 3043 / CIP 106854 / NCIMB 13768 / 1H11).